A 136-amino-acid polypeptide reads, in one-letter code: ATP synthase F(0) complex subunit C1, mitochondrial (136 aa).

Residues 1–61 (MQTTGALLIS…REFQTSVVSR (61 aa)) constitute a mitochondrion transit peptide. Residues 77–97 (VGVAGSGAGIGTVFGSLIIGY) form a helical membrane-spanning segment. Lys104 bears the N6,N6,N6-trimethyllysine mark. A helical membrane pass occupies residues 112–132 (ILGFALSEAMGLFCLMVAFLI).

The protein belongs to the ATPase C chain family. Homooctamer; the c-ring consists of eight c subunits forming a circle, and each subunit adopts a hairpin shape. Component of the ATP synthase complex composed at least of ATP5F1A/subunit alpha, ATP5F1B/subunit beta, ATP5MC1/subunit c (homooctomer), MT-ATP6/subunit a, MT-ATP8/subunit 8, ATP5ME/subunit e, ATP5MF/subunit f, ATP5MG/subunit g, ATP5MK/subunit k, ATP5MJ/subunit j, ATP5F1C/subunit gamma, ATP5F1D/subunit delta, ATP5F1E/subunit epsilon, ATP5PF/subunit F6, ATP5PB/subunit b, ATP5PD/subunit d, ATP5PO/subunit OSCP. ATP synthase complex consists of a soluble F(1) head domain (subunits alpha(3) and beta(3)) - the catalytic core - and a membrane F(0) domain - the membrane proton channel (subunits c, a, 8, e, f, g, k and j). These two domains are linked by a central stalk (subunits gamma, delta, and epsilon) rotating inside the F1 region and a stationary peripheral stalk (subunits F6, b, d, and OSCP). Interacts with TMEM70 (homooligomer form); this interaction facilitates the oligomer formation of subunit c/ATP5MC1 (c-ring) and the c-ring membrane insertion and also protects ATP5MC1 against intramitochondrial proteolysis. In terms of processing, trimethylated by ATPSCKMT at Lys-104. Methylation is required for proper incorporation of the C subunit into the ATP synthase complex and mitochondrial respiration.

Its subcellular location is the mitochondrion membrane. The enzyme catalyses H(+)(in) = H(+)(out). Its function is as follows. Subunit c, of the mitochondrial membrane ATP synthase complex (F(1)F(0) ATP synthase or Complex V) that produces ATP from ADP in the presence of a proton gradient across the membrane which is generated by electron transport complexes of the respiratory chain. ATP synthase complex consist of a soluble F(1) head domain - the catalytic core - and a membrane F(1) domain - the membrane proton channel. These two domains are linked by a central stalk rotating inside the F(1) region and a stationary peripheral stalk. During catalysis, ATP synthesis in the catalytic domain of F(1) is coupled via a rotary mechanism of the central stalk subunits to proton translocation. With the subunit a (MT-ATP6), forms the proton-conducting channel in the F(0) domain, that contains two crucial half-channels (inlet and outlet) that facilitate proton movement from the mitochondrial intermembrane space (IMS) into the matrix. Protons are taken up via the inlet half-channel and released through the outlet half-channel, following a Grotthuss mechanism. The protein is ATP synthase F(0) complex subunit C1, mitochondrial of Ovis aries (Sheep).